Consider the following 256-residue polypeptide: uncharacterized protein (256 aa).

The stretch at 213–243 (TMSMEAKLEAAKKTLEKFKQEAASKRAKRTK) forms a coiled coil. Residues 231–256 (KQEAASKRAKRTKPSGSKTTRSTGRK) are disordered. The span at 244 to 256 (PSGSKTTRSTGRK) shows a compositional bias: polar residues.

This is an uncharacterized protein from Acanthamoeba polyphaga (Amoeba).